A 122-amino-acid polypeptide reads, in one-letter code: Large ribosomal subunit protein bL19 (122 aa).

Belongs to the bacterial ribosomal protein bL19 family.

Functionally, this protein is located at the 30S-50S ribosomal subunit interface and may play a role in the structure and function of the aminoacyl-tRNA binding site. This Acinetobacter baumannii (strain AB307-0294) protein is Large ribosomal subunit protein bL19.